Consider the following 231-residue polypeptide: GFP-like fluorescent chromoprotein FP506 (231 aa).

Positions 66 to 68 (NYG) form a cross-link, 5-imidazolinone (Asn-Gly). Tyr67 bears the 2,3-didehydrotyrosine mark.

This sequence belongs to the GFP family. In terms of processing, contains a chromophore consisting of modified amino acid residues. The chromophore is formed by autocatalytic backbone condensation between Xaa-N and Gly-(N+2), and oxidation of Tyr-(N+1) to didehydrotyrosine. Maturation of the chromophore requires nothing other than molecular oxygen. The precise stereochemistry of the tyrosine has not been determined. Tentacle and oral disk.

Its function is as follows. Pigment protein that is yellow-green in color. This chain is GFP-like fluorescent chromoprotein FP506, found in Zoanthus sp. (Green polyp).